We begin with the raw amino-acid sequence, 236 residues long: MTRRYWNINLEEMMEAGVHFGHGTRKWNPRMAPYISAKRKGIHITNLTKTARFLSEACDLVFDAASRGKQFLIVGTKNKAADSVARAAIRARCHYVNKKWLGGMLTNWSTTETRLHKFRDLRTEQKAGRLNRLPKRDAAMLKRQLSHLQTYLGGIKYMTGLPDIVIIVDQQEEYTALRECITLGIPTICLIDTNCDPDLADISIPANDDAIASIRLILNKLVFAICEGRSSYIRNP.

The protein belongs to the universal ribosomal protein uS2 family.

It is found in the plastid. The protein localises to the chloroplast. In Eucalyptus globulus subsp. globulus (Tasmanian blue gum), this protein is Small ribosomal subunit protein uS2c (rps2).